The following is a 274-amino-acid chain: Bis(5'-nucleosyl)-tetraphosphatase, symmetrical (274 aa).

This sequence belongs to the Ap4A hydrolase family.

It catalyses the reaction P(1),P(4)-bis(5'-adenosyl) tetraphosphate + H2O = 2 ADP + 2 H(+). Functionally, hydrolyzes diadenosine 5',5'''-P1,P4-tetraphosphate to yield ADP. The chain is Bis(5'-nucleosyl)-tetraphosphatase, symmetrical from Shewanella oneidensis (strain ATCC 700550 / JCM 31522 / CIP 106686 / LMG 19005 / NCIMB 14063 / MR-1).